A 264-amino-acid polypeptide reads, in one-letter code: MNDTPHVKLHGFNNLTKSLSFNMYDICYTKTPKEREAYISYIDDVYNAERLTNILKHVADIIGAHVLNIAKQDYVPQGASVTMLVSEGPVVEVPQAEAPLPEAVVLSLDKSHITVHTYPEYHPSDGISTFRADIDVVTCGEISPLKALDYLIQSFEADIMIIDYRVRGFTRDIHGYKLFIDHDITSIQNYIPEDIREKYDMIDVNIYQENIFHTKCKLRQFDLDNYLFGHTKDALSKQEVEETTAKLKREMDEIFYGKNMPSGF.

S111 functions as the Schiff-base intermediate with substrate; via pyruvic acid in the catalytic mechanism. S111 carries the post-translational modification Pyruvic acid (Ser); by autocatalysis. Residue H116 is the Proton acceptor; for processing activity of the active site. The Proton donor; for catalytic activity role is filled by C139.

Belongs to the prokaryotic AdoMetDC family. Type 2 subfamily. In terms of assembly, heterooctamer of four alpha and four beta chains arranged as a tetramer of alpha/beta heterodimers. Pyruvate is required as a cofactor. In terms of processing, is synthesized initially as an inactive proenzyme. Formation of the active enzyme involves a self-maturation process in which the active site pyruvoyl group is generated from an internal serine residue via an autocatalytic post-translational modification. Two non-identical subunits are generated from the proenzyme in this reaction, and the pyruvate is formed at the N-terminus of the alpha chain, which is derived from the carboxyl end of the proenzyme. The post-translation cleavage follows an unusual pathway, termed non-hydrolytic serinolysis, in which the side chain hydroxyl group of the serine supplies its oxygen atom to form the C-terminus of the beta chain, while the remainder of the serine residue undergoes an oxidative deamination to produce ammonia and the pyruvoyl group blocking the N-terminus of the alpha chain.

It catalyses the reaction S-adenosyl-L-methionine + H(+) = S-adenosyl 3-(methylsulfanyl)propylamine + CO2. It functions in the pathway amine and polyamine biosynthesis; S-adenosylmethioninamine biosynthesis; S-adenosylmethioninamine from S-adenosyl-L-methionine: step 1/1. Its function is as follows. Catalyzes the decarboxylation of S-adenosylmethionine to S-adenosylmethioninamine (dcAdoMet), the propylamine donor required for the synthesis of the polyamines spermine and spermidine from the diamine putrescine. This Geobacillus thermodenitrificans (strain NG80-2) protein is S-adenosylmethionine decarboxylase proenzyme.